The sequence spans 238 residues: Probable transcriptional regulatory protein STER_0242 (238 aa).

This sequence belongs to the TACO1 family. YeeN subfamily.

It is found in the cytoplasm. The polypeptide is Probable transcriptional regulatory protein STER_0242 (Streptococcus thermophilus (strain ATCC BAA-491 / LMD-9)).